The sequence spans 271 residues: 3-methyl-2-oxobutanoate hydroxymethyltransferase (271 aa).

Mg(2+) contacts are provided by D51 and D90. 3-methyl-2-oxobutanoate is bound by residues 51-52, D90, and K119; that span reads DS. A Mg(2+)-binding site is contributed by E121. Catalysis depends on E188, which acts as the Proton acceptor.

The protein belongs to the PanB family. Homodecamer; pentamer of dimers. Requires Mg(2+) as cofactor.

It localises to the cytoplasm. It catalyses the reaction 3-methyl-2-oxobutanoate + (6R)-5,10-methylene-5,6,7,8-tetrahydrofolate + H2O = 2-dehydropantoate + (6S)-5,6,7,8-tetrahydrofolate. The protein operates within cofactor biosynthesis; (R)-pantothenate biosynthesis; (R)-pantoate from 3-methyl-2-oxobutanoate: step 1/2. Its function is as follows. Catalyzes the reversible reaction in which hydroxymethyl group from 5,10-methylenetetrahydrofolate is transferred onto alpha-ketoisovalerate to form ketopantoate. The protein is 3-methyl-2-oxobutanoate hydroxymethyltransferase of Azoarcus sp. (strain BH72).